Reading from the N-terminus, the 1173-residue chain is Pumilio homolog 2 (1173 aa).

Disordered stretches follow at residues 41–68 (VSSA…PLSG), 265–296 (VSKL…ASPT), 480–518 (QQAA…ESLA), 592–662 (LTGA…SLGF), and 730–759 (PISM…SSSL). Over residues 287 to 296 (TPGSRQASPT) the composition is skewed to polar residues. The segment covering 480-492 (QQAATQASQGQQQ) has biased composition (low complexity). Positions 493 to 518 (VMRATSNQRPLTPNQAQQGQQPESLA) are enriched in polar residues. Over residues 606–622 (QQQQQQQQQQHQQQQQQ) the composition is skewed to low complexity. Positions 623-633 (PNANLHSNSFY) are enriched in polar residues. Low complexity predominate over residues 634-657 (GNSTMSNNSQSSSLFSPGPGQPGS). The region spanning 815–1155 (GRSRLLEDFR…HILAKLEKYY (341 aa)) is the PUM-HD domain. 9 Pumilio repeats span residues 835-870 (DLMG…LVFS), 871-906 (EILQ…ALAT), 907-942 (RIRG…EMVR), 943-978 (ELDG…FIIE), 979-1014 (AFKG…PILE), 1015-1050 (ELHQ…KIVC), 1051-1086 (EVRG…FLID), 1087-1129 (EICC…IIMH), and 1130-1167 (KIRP…LLVG). The adenine-nucleotide binding in RNA target stretch occupies residues 850–854 (SRFIQ). The interval 886-890 (NYVIQ) is uracil-nucleotide binding in RNA target. Positions 922–926 (CRVIQ) are adenine-nucleotide binding in RNA target. The interval 958–962 (NHVVQ) is non-specific-nucleotide binding in RNA target. The interval 994–998 (CRVIQ) is adenine-nucleotide binding in RNA target. Positions 1030–1034 (NYVIQ) are uracil-nucleotide binding in RNA target. The interval 1066–1070 (SNVVE) is guanine-nucleotide binding in RNA target. The uracil-nucleotide binding in RNA target stretch occupies residues 1109-1113 (NYVVQ).

Component of a complex with papd4, sympk, tacc3, parn, dazl and cpeb1. In terms of processing, phosphorylated.

The protein resides in the cytoplasm. Its subcellular location is the P-body. It localises to the cytoplasmic granule. Sequence-specific RNA-binding protein that acts as a post-transcriptional repressor by binding the 3'-UTR of mRNA targets. Binds to an RNA consensus sequence, the Pumilio Response Element (PRE), 5'-UGUANAUA-3', that is related to the Nanos Response Element (NRE). Mediates post-transcriptional repression of transcripts via different mechanisms: acts via direct recruitment of deadenylase complexes leading to translational inhibition and mRNA degradation. Also mediates deadenylation-independent repression by promoting accessibility of miRNAs. This chain is Pumilio homolog 2 (pum2), found in Xenopus laevis (African clawed frog).